The chain runs to 175 residues: Adenine phosphoribosyltransferase (175 aa).

Belongs to the purine/pyrimidine phosphoribosyltransferase family. In terms of assembly, homodimer.

The protein localises to the cytoplasm. The catalysed reaction is AMP + diphosphate = 5-phospho-alpha-D-ribose 1-diphosphate + adenine. The protein operates within purine metabolism; AMP biosynthesis via salvage pathway; AMP from adenine: step 1/1. Its function is as follows. Catalyzes a salvage reaction resulting in the formation of AMP, that is energically less costly than de novo synthesis. The polypeptide is Adenine phosphoribosyltransferase (Francisella tularensis subsp. holarctica (strain FTNF002-00 / FTA)).